A 176-amino-acid polypeptide reads, in one-letter code: Sperm-egg fusion protein TMEM95 (176 aa).

A signal peptide spans 1-16; that stretch reads MWVLALGGAFLAVAKA. 4 disulfides stabilise this stretch: Cys-17-Cys-119, Cys-20-Cys-122, Cys-106-Cys-129, and Cys-110-Cys-135. Residues 17 to 146 are Extracellular-facing; that stretch reads CIFCRLQDHA…PDSHDLWDAR (130 aa). 2 N-linked (GlcNAc...) asparagine glycosylation sites follow: Asn-36 and Asn-118. The chain crosses the membrane as a helical span at residues 147 to 167; the sequence is ILLLCIFGIVLLSGVVSLQVE. Residues 168–176 lie on the Cytoplasmic side of the membrane; it reads YLNLQAKDL.

This sequence belongs to the TMEM95 family. As to quaternary structure, does not interact with sperm-egg fusion proteins IZUMO1 or IZUMO1R/JUNO. Post-translationally, N-glycosylated. As to expression, expressed exclusively in testis.

It is found in the cytoplasmic vesicle. It localises to the secretory vesicle. Its subcellular location is the acrosome membrane. Sperm protein required for fusion of sperm with the egg membrane during fertilization. The polypeptide is Sperm-egg fusion protein TMEM95 (Mus musculus (Mouse)).